A 1385-amino-acid polypeptide reads, in one-letter code: DNA-directed RNA polymerase subunit beta'' (1385 aa).

Positions 224, 294, 301, and 304 each coordinate Zn(2+).

Belongs to the RNA polymerase beta' chain family. RpoC2 subfamily. As to quaternary structure, in plastids the minimal PEP RNA polymerase catalytic core is composed of four subunits: alpha, beta, beta', and beta''. When a (nuclear-encoded) sigma factor is associated with the core the holoenzyme is formed, which can initiate transcription. Zn(2+) serves as cofactor.

It localises to the plastid. It is found in the chloroplast. The catalysed reaction is RNA(n) + a ribonucleoside 5'-triphosphate = RNA(n+1) + diphosphate. DNA-dependent RNA polymerase catalyzes the transcription of DNA into RNA using the four ribonucleoside triphosphates as substrates. The sequence is that of DNA-directed RNA polymerase subunit beta'' from Illicium oligandrum (Star anise).